The sequence spans 203 residues: Glycerol-3-phosphate acyltransferase (203 aa).

6 helical membrane passes run 5-25 (IIYLLAYLIGAIPFGLLLAQI), 58-78 (TLAVATVILDALKGVLPILMA), 87-107 (ILWTMAVLAVFGHCFSPYLKF), 118-138 (GVLAVFLPFEIICALLAWFII), 150-170 (LGAMIVLIATSFIFHYDIPVI), and 176-196 (IFIIAFIVVYKHIPNILRLIG).

The protein belongs to the PlsY family. In terms of assembly, probably interacts with PlsX.

It localises to the cell inner membrane. It catalyses the reaction an acyl phosphate + sn-glycerol 3-phosphate = a 1-acyl-sn-glycero-3-phosphate + phosphate. The protein operates within lipid metabolism; phospholipid metabolism. Functionally, catalyzes the transfer of an acyl group from acyl-phosphate (acyl-PO(4)) to glycerol-3-phosphate (G3P) to form lysophosphatidic acid (LPA). This enzyme utilizes acyl-phosphate as fatty acyl donor, but not acyl-CoA or acyl-ACP. The polypeptide is Glycerol-3-phosphate acyltransferase (Campylobacter lari (strain RM2100 / D67 / ATCC BAA-1060)).